Consider the following 1224-residue polypeptide: Serine/threonine-protein kinase CST20 (1224 aa).

The span at 1-18 (MSILSENNPTPTSITDPN) shows a compositional bias: polar residues. Disordered regions lie at residues 1 to 378 (MSIL…TAHN) and 403 to 464 (TNSS…HSQE). 2 stretches are compositionally biased toward low complexity: residues 57–70 (NTTS…SLGS) and 95–119 (DSGS…NPES). Residues 144-155 (HQGDDSDNEKQY) show a composition bias toward basic and acidic residues. Polar residues-rich tracts occupy residues 169 to 191 (DSYS…NNVS), 201 to 218 (TSSL…NENA), and 231 to 240 (PTSKTSSFHD). Positions 242 to 251 (SSVISSSTSV) are enriched in low complexity. Composition is skewed to polar residues over residues 256-271 (SNPT…SYKS) and 305-324 (DTLS…TLQG). 2 stretches are compositionally biased toward low complexity: residues 343–375 (NTSA…STST) and 433–462 (KVRG…NSHS). The region spanning 469 to 482 (ISTPFNAKHLAHVG) is the CRIB domain. 2 disordered regions span residues 539–825 (FHFD…ALAD) and 861–913 (LREK…KQAA). A compositionally biased stretch (polar residues) spans 544-555 (NKSSSSGWSNEN). The segment covering 564–575 (SNSGSGSGGGGA) has biased composition (gly residues). A compositionally biased stretch (polar residues) spans 598-607 (ITPSQSMPTK). Basic and acidic residues predominate over residues 608 to 622 (TESKQSENQHPHEDN). Polar residues predominate over residues 623–636 (ATQYTPRTPTSHVQ). Low complexity-rich tracts occupy residues 664–677 (PSSQ…SQSD), 690–704 (SPSK…SKSL), and 730–743 (SIPK…SLSS). The span at 744 to 755 (QLRPATNGSTTA) shows a compositional bias: polar residues. A compositionally biased stretch (pro residues) spans 783–801 (APPPPPSAPPAPPVPPAPP). The span at 805-820 (LSEQTSEIPQQRTAPS) shows a compositional bias: polar residues. The span at 861 to 870 (LREKNERQNR) shows a compositional bias: basic and acidic residues. Residues 871-886 (QQETGQNNADTASGGS) show a composition bias toward polar residues. The Protein kinase domain maps to 947–1199 (YVDLVKIGQG…ADELLHDNFI (253 aa)). ATP contacts are provided by residues 953 to 961 (IGQGASGGV) and K977. Residue D1067 is the Proton acceptor of the active site.

Belongs to the protein kinase superfamily. STE Ser/Thr protein kinase family. STE20 subfamily.

Its subcellular location is the cytoplasm. The protein localises to the nucleus. The catalysed reaction is L-seryl-[protein] + ATP = O-phospho-L-seryl-[protein] + ADP + H(+). It carries out the reaction L-threonyl-[protein] + ATP = O-phospho-L-threonyl-[protein] + ADP + H(+). Functionally, MAP4K component of the MAPK pathway required for the mating pheromone response, and the regulation of cell polarity and cell cycle. Phosphorylates histone H2B to form H2BS10ph. Required for hyphal formation and virulence. The chain is Serine/threonine-protein kinase CST20 (CST20) from Candida albicans (strain WO-1) (Yeast).